The following is a 234-amino-acid chain: Golgi SNAP receptor complex member 1 (234 aa).

Residues 1-212 lie on the Cytoplasmic side of the membrane; it reads MSETWEALRK…MQKIKTKKQK (212 aa). Positions 54–121 form a coiled coil; that stretch reads VTTEIEGLIE…RDNVDQVLQR (68 aa). A helical; Anchor for type IV membrane protein transmembrane segment spans residues 213 to 233; it reads NTLILAAVISSCLIFTIFWII. A topological domain (vesicular) is located at residue Asn-234.

It belongs to the GOSR1 family. Component of several multiprotein Golgi SNARE complexes.

The protein resides in the golgi apparatus membrane. Involved in transport from the ER to the Golgi apparatus as well as in intra-Golgi transport. It belongs to a super-family of proteins called t-SNAREs or soluble NSF (N-ethylmaleimide-sensitive factor) attachment protein receptor. Cooperates with ykt-6 for proper expression of Golgi-resident proteins. Required along with ykt-6 for normal embryonic development, seam cell division or differentiation, and ray formation. The chain is Golgi SNAP receptor complex member 1 (gos-28) from Caenorhabditis elegans.